Reading from the N-terminus, the 210-residue chain is Outer-membrane lipoprotein carrier protein (210 aa).

A signal peptide spans 1-23 (MKKRIQKTILTVLFSSLSSIAFA).

Belongs to the LolA family. As to quaternary structure, monomer.

The protein resides in the periplasm. In terms of biological role, participates in the translocation of lipoproteins from the inner membrane to the outer membrane. Only forms a complex with a lipoprotein if the residue after the N-terminal Cys is not an aspartate (The Asp acts as a targeting signal to indicate that the lipoprotein should stay in the inner membrane). This chain is Outer-membrane lipoprotein carrier protein, found in Haemophilus ducreyi (strain 35000HP / ATCC 700724).